A 558-amino-acid polypeptide reads, in one-letter code: Type I restriction enzyme MjaIX methylase subunit (558 aa).

The interval 1 to 37 (MATLDKFLSIKENDEKTKKKESKKKSSKSNKTSESLV) is disordered. Residues 8–18 (LSIKENDEKTK) show a composition bias toward basic and acidic residues. Residues 19 to 28 (KKESKKKSSK) are compositionally biased toward basic residues. S-adenosyl-L-methionine contacts are provided by residues 227 to 232 (KFYTPR), 256 to 258 (SGG), and Asp283.

The protein belongs to the N(4)/N(6)-methyltransferase family. The type I restriction/modification system is composed of three polypeptides R, M and S.

The enzyme catalyses a 2'-deoxyadenosine in DNA + S-adenosyl-L-methionine = an N(6)-methyl-2'-deoxyadenosine in DNA + S-adenosyl-L-homocysteine + H(+). In terms of biological role, the subtype gamma methyltransferase (M) subunit of a type I restriction enzyme. The M and S subunits together form a methyltransferase (MTase) that methylates A-3 on the top and A-2 on the bottom strand of the sequence 5'-CCAN(5)GTR-3'. In the presence of the R subunit the complex can also act as an endonuclease, binding to the same target sequence but cutting the DNA some distance from this site. Whether the DNA is cut or modified depends on the methylation state of the target sequence. When the target site is unmodified, the DNA is cut. When the target site is hemimethylated, the complex acts as a maintenance MTase modifying the DNA so that both strands become methylated. After locating a non-methylated recognition site, the enzyme complex serves as a molecular motor that translocates DNA in an ATP-dependent manner until a collision occurs that triggers cleavage. The chain is Type I restriction enzyme MjaIX methylase subunit from Methanocaldococcus jannaschii (strain ATCC 43067 / DSM 2661 / JAL-1 / JCM 10045 / NBRC 100440) (Methanococcus jannaschii).